A 106-amino-acid polypeptide reads, in one-letter code: Putative membrane protein insertion efficiency factor (106 aa).

The protein belongs to the UPF0161 family.

The protein localises to the cell inner membrane. Functionally, could be involved in insertion of integral membrane proteins into the membrane. In Methylacidiphilum infernorum (isolate V4) (Methylokorus infernorum (strain V4)), this protein is Putative membrane protein insertion efficiency factor.